We begin with the raw amino-acid sequence, 170 residues long: MKTQRHGPSLGRWSLVLLLLGLVMPLAIVAQVLSYQEAVLRAIDGINQRSSDANLYRLLDLDPRPTMDGDPDTPKPVSFTVKETVCPRTTQKSPQDCDFKEDGLVKRCVGTVTLNQARDSFDISCDKDNRRFARLGNFFRKAKKKIGRGLKKIGQKIKDFLGNLVPRTES.

An N-terminal signal peptide occupies residues 1–30 (MKTQRHGPSLGRWSLVLLLLGLVMPLAIVA). The propeptide at 31-131 (QVLSYQEAVL…DISCDKDNRR (101 aa)) is cathelin-like domain (CLD). 2 disulfide bridges follow: cysteine 86–cysteine 97 and cysteine 108–cysteine 125. An active core region spans residues 150-162 (LKKIGQKIKDFLG).

The protein belongs to the cathelicidin family. In terms of assembly, monomer, homodimer or homotrimer (in vitro). Oligomerizes as tetra- or hexamer in solution (in vitro). Proteolytically cleaved by proteinase PRTN3 into antibacterial peptide LL-37. Proteolytically cleaved by cathepsin CTSG and neutrophil elastase ELANE. Post-translationally, resistant to proteolytic degradation in solution, and when bound to both zwitterionic (mimicking mammalian membranes) and negatively charged membranes (mimicking bacterial membranes). In terms of processing, after secretion onto the skin surface, the CAMP gene product is processed by a serine protease-dependent mechanism into multiple novel antimicrobial peptides distinct from and shorter than cathelicidin LL-37. These peptides show enhanced antimicrobial action, acquiring the ability to kill skin pathogens such as S.aureus, E.coli and C.albicans. These peptides have lost the ability to stimulate CXCL8/IL8 release from keratinocytes. The peptides act synergistically, killing bacteria at lower concentrations when present together, and maintain activity at increased salt condition.

The protein resides in the secreted. The protein localises to the vesicle. Functionally, antimicrobial protein that is an integral component of the innate immune system. Binds to bacterial lipopolysaccharides (LPS). Acts via neutrophil N-formyl peptide receptors to enhance the release of CXCL2. Postsecretory processing generates multiple cathelicidin antimicrobial peptides with various lengths which act as a topical antimicrobial defense in sweat on skin. The unprocessed precursor form, cathelicidin antimicrobial peptide, inhibits the growth of Gram-negative E.coli and E.aerogenes with efficiencies comparable to that of the mature peptide LL-37 (in vitro). In terms of biological role, antimicrobial peptide that is an integral component of the innate immune system. Binds to bacterial lipopolysaccharides (LPS). Causes membrane permeabilization by forming transmembrane pores (in vitro). Causes lysis of E.coli. Exhibits antimicrobial activity against Gram-negative bacteria such as P.aeruginosa, S.typhimurium, E.aerogenes, E.coli and P.syringae, Gram-positive bacteria such as L.monocytogenes, S.epidermidis, S.pyogenes and S.aureus, as well as vancomycin-resistant enterococci (in vitro). Exhibits antimicrobial activity against methicillin-resistant S.aureus, P.mirabilis, and C.albicans in low-salt media, but not in media containing 100 mM NaCl (in vitro). Forms chiral supramolecular assemblies with quinolone signal (PQS) molecules of P.aeruginosa, which may lead to interference of bacterial quorum signaling and perturbance of bacterial biofilm formation. May form supramolecular fiber-like assemblies on bacterial membranes. Induces cytokine and chemokine producation as well as TNF/TNFA and CSF2/GMCSF production in normal human keratinocytes. Exhibits hemolytic activity against red blood cells. Its function is as follows. Exhibits antimicrobial activity against E.coli and B.megaterium (in vitro). The protein is Cathelicidin antimicrobial peptide of Trachypithecus obscurus (Dusky leaf-monkey).